The following is a 648-amino-acid chain: Replication restart protein PriA (648 aa).

One can recognise a Helicase ATP-binding domain in the interval 131–297; sequence TIFNESNKPT…KTHKYQLVTL (167 aa). Residue 144–151 coordinates ATP; that stretch reads GVTGSGKT. Positions 240-243 match the DEAH box motif; sequence DEEH. Zn(2+) contacts are provided by cysteine 358, cysteine 361, cysteine 367, cysteine 370, cysteine 385, cysteine 388, cysteine 398, and cysteine 401. The Helicase C-terminal domain occupies 393–548; the sequence is KIFSSCPECL…SFFTNELEIR (156 aa).

The protein belongs to the helicase family. PriA subfamily. As to quaternary structure, component of the replication restart primosome. Zn(2+) is required as a cofactor.

It catalyses the reaction Couples ATP hydrolysis with the unwinding of duplex DNA by translocating in the 3'-5' direction.. The catalysed reaction is ATP + H2O = ADP + phosphate + H(+). Initiates the restart of stalled replication forks, which reloads the replicative helicase on sites other than the origin of replication. Recognizes and binds to abandoned replication forks and remodels them to uncover a helicase loading site. Promotes assembly of the primosome at these replication forks. The protein is Replication restart protein PriA of Rickettsia typhi (strain ATCC VR-144 / Wilmington).